Reading from the N-terminus, the 95-residue chain is Co-chaperonin GroES (95 aa).

This sequence belongs to the GroES chaperonin family. Heptamer of 7 subunits arranged in a ring. Interacts with the chaperonin GroEL.

Its subcellular location is the cytoplasm. Its function is as follows. Together with the chaperonin GroEL, plays an essential role in assisting protein folding. The GroEL-GroES system forms a nano-cage that allows encapsulation of the non-native substrate proteins and provides a physical environment optimized to promote and accelerate protein folding. GroES binds to the apical surface of the GroEL ring, thereby capping the opening of the GroEL channel. This is Co-chaperonin GroES from Oleidesulfovibrio alaskensis (strain ATCC BAA-1058 / DSM 17464 / G20) (Desulfovibrio alaskensis).